Here is a 469-residue protein sequence, read N- to C-terminus: GTPase Der (469 aa).

2 consecutive EngA-type G domains span residues 3-166 (PVIA…PEDE) and 177-350 (LRLA…ESAN). Residues 9-16 (GRPNVGKS), 56-60 (DTGGI), 118-121 (NKVD), 183-190 (GRPNVGKS), 230-234 (DTAGV), and 295-298 (NKWD) contribute to the GTP site. The 85-residue stretch at 351–435 (LKVSPAKLTQ…PVKIEFKTSE (85 aa)) folds into the KH-like domain.

The protein belongs to the TRAFAC class TrmE-Era-EngA-EngB-Septin-like GTPase superfamily. EngA (Der) GTPase family. In terms of assembly, associates with the 50S ribosomal subunit.

Its function is as follows. GTPase that plays an essential role in the late steps of ribosome biogenesis. The sequence is that of GTPase Der from Acinetobacter baumannii (strain ACICU).